Reading from the N-terminus, the 108-residue chain is MWVMVVTLAPIEPKVRPNTTWQHESAPVDITAARWVTIVWDDPVNLMAYVTYVFQKLFGYSEPHATKLMLQVHNEGKAVVSMGSRESMEVDVSKLHAAGLWATMQQDR.

Belongs to the ClpS family. Binds to the N-terminal domain of the chaperone ClpA.

Involved in the modulation of the specificity of the ClpAP-mediated ATP-dependent protein degradation. In Mycobacterium leprae (strain TN), this protein is ATP-dependent Clp protease adapter protein ClpS.